The primary structure comprises 508 residues: Ribonuclease Y (508 aa).

The chain crosses the membrane as a helical span at residues I2–I22. Residues T198–L261 enclose the KH domain. The 94-residue stretch at V324–A417 folds into the HD domain.

This sequence belongs to the RNase Y family.

Its subcellular location is the cell membrane. Its function is as follows. Endoribonuclease that initiates mRNA decay. This is Ribonuclease Y from Thermoanaerobacter pseudethanolicus (strain ATCC 33223 / 39E) (Clostridium thermohydrosulfuricum).